Here is an 886-residue protein sequence, read N- to C-terminus: Protein translocase subunit SecA (886 aa).

ATP-binding positions include Gln81, 99–103 (GEGKT), and Asp489.

Belongs to the SecA family.

Its subcellular location is the plastid. It localises to the chloroplast stroma. It is found in the chloroplast thylakoid membrane. It catalyses the reaction ATP + H2O + cellular proteinSide 1 = ADP + phosphate + cellular proteinSide 2.. Its function is as follows. Has a central role in coupling the hydrolysis of ATP to the transfer of proteins across the thylakoid membrane. This is Protein translocase subunit SecA from Phaeodactylum tricornutum (strain CCAP 1055/1).